Consider the following 833-residue polypeptide: Urease (833 aa).

One can recognise a Urease domain in the interval 395-833 (GALDVHVHYI…LPLTKRYFVY (439 aa)). Positions 400 and 402 each coordinate Ni(2+). The urea site is built by histidine 402 and alanine 433. Lysine 483 provides a ligand contact to Ni(2+). The residue at position 483 (lysine 483) is an N6-carboxylysine. 2 residues coordinate urea: histidine 485 and histidine 512. Residues histidine 512 and histidine 538 each coordinate Ni(2+). Catalysis depends on histidine 586, which acts as the Proton donor. A Ni(2+)-binding site is contributed by aspartate 626. A urea-binding site is contributed by alanine 629.

In the C-terminal section; belongs to the metallo-dependent hydrolases superfamily. Urease alpha subunit family. In terms of assembly, homohexamer. Ni(2+) serves as cofactor. In terms of processing, carboxylation allows a single lysine to coordinate two nickel ions.

The enzyme catalyses urea + 2 H2O + H(+) = hydrogencarbonate + 2 NH4(+). Its pathway is nitrogen metabolism; urea degradation; CO(2) and NH(3) from urea (urease route): step 1/1. The urease accessory proteins URE4, URE6 and URE7 are required for urease activity, URE7 supplying nickel for the functional urease. Plays a nutritional role via nitrogen acquisition in the environment. Contributes to the central nervous system invasion by enhancing yeast sequestration within microcapillary beds (such as within the brain) during hematogenous spread, thereby facilitating blood-to-brain invasion by C.neoformans. Affects fitness within the mammalian phagosome, promoting non-lytic exocytosis while delaying intracellular replication and thus reducing phagolysosomal membrane damage, events that could facilitate cryptococcal dissemination when transported inside macrophages. Urease activity is also associated with the regulation of key intracellular metabolic pathways, including melanin biosynthesis, polyamine biosynthesis, as well as intracellular levels of proline and reactive oxygen species. The sequence is that of Urease from Cryptococcus neoformans var. neoformans serotype D (strain B-3501A) (Filobasidiella neoformans).